The following is a 109-amino-acid chain: Large ribosomal subunit protein uL24 (109 aa).

The protein belongs to the universal ribosomal protein uL24 family. Part of the 50S ribosomal subunit.

In terms of biological role, one of two assembly initiator proteins, it binds directly to the 5'-end of the 23S rRNA, where it nucleates assembly of the 50S subunit. Its function is as follows. One of the proteins that surrounds the polypeptide exit tunnel on the outside of the subunit. In Syntrophotalea carbinolica (strain DSM 2380 / NBRC 103641 / GraBd1) (Pelobacter carbinolicus), this protein is Large ribosomal subunit protein uL24.